Consider the following 429-residue polypeptide: Serine hydroxymethyltransferase (429 aa).

Residues Leu126 and 130–132 (GHL) contribute to the (6S)-5,6,7,8-tetrahydrofolate site. Lys235 bears the N6-(pyridoxal phosphate)lysine mark. A (6S)-5,6,7,8-tetrahydrofolate-binding site is contributed by 359-361 (SPF).

The protein belongs to the SHMT family. Homodimer. Pyridoxal 5'-phosphate serves as cofactor.

Its subcellular location is the cytoplasm. The enzyme catalyses (6R)-5,10-methylene-5,6,7,8-tetrahydrofolate + glycine + H2O = (6S)-5,6,7,8-tetrahydrofolate + L-serine. It functions in the pathway one-carbon metabolism; tetrahydrofolate interconversion. The protein operates within amino-acid biosynthesis; glycine biosynthesis; glycine from L-serine: step 1/1. Catalyzes the reversible interconversion of serine and glycine with tetrahydrofolate (THF) serving as the one-carbon carrier. This reaction serves as the major source of one-carbon groups required for the biosynthesis of purines, thymidylate, methionine, and other important biomolecules. Also exhibits THF-independent aldolase activity toward beta-hydroxyamino acids, producing glycine and aldehydes, via a retro-aldol mechanism. The protein is Serine hydroxymethyltransferase of Prochlorococcus marinus (strain MIT 9313).